A 134-amino-acid polypeptide reads, in one-letter code: Transcription antitermination protein NusB (134 aa).

It belongs to the NusB family.

Its function is as follows. Involved in transcription antitermination. Required for transcription of ribosomal RNA (rRNA) genes. Binds specifically to the boxA antiterminator sequence of the ribosomal RNA (rrn) operons. This is Transcription antitermination protein NusB from Shewanella sp. (strain W3-18-1).